The primary structure comprises 489 residues: Cysteine--tRNA ligase (489 aa).

Cys-27 provides a ligand contact to Zn(2+). The 'HIGH' region motif lies at 29 to 39 (VTVYDLCHLGH). Zn(2+) is bound by residues Cys-211, His-236, and Glu-240. A 'KMSKS' region motif is present at residues 268-272 (KMSKS). Position 271 (Lys-271) interacts with ATP.

Belongs to the class-I aminoacyl-tRNA synthetase family. Monomer. Zn(2+) serves as cofactor.

It is found in the cytoplasm. The enzyme catalyses tRNA(Cys) + L-cysteine + ATP = L-cysteinyl-tRNA(Cys) + AMP + diphosphate. This chain is Cysteine--tRNA ligase, found in Prochlorococcus marinus (strain MIT 9312).